The sequence spans 401 residues: ATP phosphoribosyltransferase regulatory subunit (401 aa).

It belongs to the class-II aminoacyl-tRNA synthetase family. HisZ subfamily. Heteromultimer composed of HisG and HisZ subunits.

The protein localises to the cytoplasm. It participates in amino-acid biosynthesis; L-histidine biosynthesis; L-histidine from 5-phospho-alpha-D-ribose 1-diphosphate: step 1/9. In terms of biological role, required for the first step of histidine biosynthesis. May allow the feedback regulation of ATP phosphoribosyltransferase activity by histidine. This Desulforamulus reducens (strain ATCC BAA-1160 / DSM 100696 / MI-1) (Desulfotomaculum reducens) protein is ATP phosphoribosyltransferase regulatory subunit.